Reading from the N-terminus, the 451-residue chain is Probable DNA polymerase delta small subunit (451 aa).

Belongs to the DNA polymerase delta/II small subunit family. Heterodimer with subunits of 125 kDa and 50 kDa.

The protein resides in the nucleus. The enzyme catalyses DNA(n) + a 2'-deoxyribonucleoside 5'-triphosphate = DNA(n+1) + diphosphate. In terms of biological role, the function of the small subunit is not yet clear. This Caenorhabditis elegans protein is Probable DNA polymerase delta small subunit.